The primary structure comprises 622 residues: UvrABC system protein C (622 aa).

The GIY-YIG domain maps to 13–92; that stretch reads DKPGVYLMKN…IKENRPKYNV (80 aa). Residues 205-240 enclose the UVR domain; that stretch reads DELIKKIEEKMKRAAEKMDFEGAAHYRDQRQALLDI.

The protein belongs to the UvrC family. As to quaternary structure, interacts with UvrB in an incision complex.

Its subcellular location is the cytoplasm. Functionally, the UvrABC repair system catalyzes the recognition and processing of DNA lesions. UvrC both incises the 5' and 3' sides of the lesion. The N-terminal half is responsible for the 3' incision and the C-terminal half is responsible for the 5' incision. The polypeptide is UvrABC system protein C (Alkaliphilus metalliredigens (strain QYMF)).